A 979-amino-acid polypeptide reads, in one-letter code: Pro-apoptotic serine protease NMA111 (979 aa).

The interval 1-20 (MTIMNEGKKRSHSSSSDDHL) is disordered. Residues 65 to 255 (VVSIHFAQVA…LPLDRILRAL (191 aa)) form a serine protease region. Active-site charge relay system residues include His103, Asp134, and Ser217. 2 consecutive PDZ domains span residues 273-361 (WLLK…RGGT) and 750-836 (SILH…VRDG).

The protein belongs to the peptidase S1C family.

It localises to the nucleus. In terms of biological role, nuclear serine protease which mediates apoptosis. The sequence is that of Pro-apoptotic serine protease NMA111 (NMA111) from Candida glabrata (strain ATCC 2001 / BCRC 20586 / JCM 3761 / NBRC 0622 / NRRL Y-65 / CBS 138) (Yeast).